Consider the following 547-residue polypeptide: Intercellular adhesion molecule 3 (547 aa).

Positions Met1–Gly29 are cleaved as a signal peptide. At Gln30–His485 the chain is on the extracellular side. An Ig-like C2-type 1 domain is found at Gly46–Ser103. 6 N-linked (GlcNAc...) asparagine glycosylation sites follow: Asn52, Asn84, Asn87, Asn101, Asn110, and Asn134. 2 disulfides stabilise this stretch: Cys53-Cys96 and Cys57-Cys100. The region spanning Gly132–Gln197 is the Ig-like C2-type 2 domain. A disulfide bridge connects residues Cys139 and Cys190. N-linked (GlcNAc...) asparagine glycans are attached at residues Asn206, Asn264, Asn295, Asn308, Asn320, Asn363, Asn389, Asn453, and Asn457. Residues Glu234–Glu301 form the Ig-like C2-type 3 domain. A disulfide bond links Cys241 and Cys294. Residues Gly329–Asp382 enclose the Ig-like C2-type 4 domain. A disulfide bridge connects residues Cys336 and Cys375. Positions Lys416–Gly469 constitute an Ig-like C2-type 5 domain. Cys423 and Cys462 form a disulfide bridge. A helical membrane pass occupies residues Phe486 to Phe510. The Cytoplasmic segment spans residues Arg511–Glu547.

The protein belongs to the immunoglobulin superfamily. ICAM family. In terms of assembly, interacts with moesin/MSN. Upon stimulation by a physiologic stimuli becomes rapidly and transiently phosphorylated on serine residues. Post-translationally, N-glycosylated; glycans consist of a mixture of tri- and tetra-antennary complex-type chains and high-mannose chains. In terms of tissue distribution, leukocytes.

It is found in the membrane. ICAM proteins are ligands for the leukocyte adhesion protein LFA-1 (integrin alpha-L/beta-2). ICAM3 is also a ligand for integrin alpha-D/beta-2. In association with integrin alpha-L/beta-2, contributes to apoptotic neutrophil phagocytosis by macrophages. The polypeptide is Intercellular adhesion molecule 3 (ICAM3) (Homo sapiens (Human)).